Here is a 121-residue protein sequence, read N- to C-terminus: Chorion class A proteins Ld9 (121 aa).

Belongs to the chorion protein family.

Functionally, this protein is one of many from the eggshell of the gypsy moth. This chain is Chorion class A proteins Ld9, found in Lymantria dispar (Gypsy moth).